A 385-amino-acid chain; its full sequence is Elsinochromes biosynthesis cluster protein HP2 (385 aa).

Positions 1-22 are cleaved as a signal peptide; the sequence is MVLLYILIMVALIPMYMTVVQD. 2 consecutive transmembrane segments (helical) span residues 94–114 and 148–168; these read TVLSALLLTFVFFWRMLSMFD and FYGQALYFGIMCLYTAHIVLW. Residue N187 is glycosylated (N-linked (GlcNAc...) asparagine). The helical transmembrane segment at 209 to 229 threads the bilayer; sequence SWTFGQIVPIVLLVSPLVAAF. Residue N248 is glycosylated (N-linked (GlcNAc...) asparagine). A run of 2 helical transmembrane segments spans residues 309–329 and 344–364; these read AILFWELHVLLAFMVIWLPLA and YYAFPAAVGTFWLTVVIAVPF.

Its subcellular location is the membrane. Part of the gene cluster that mediates the biosynthesis of elsinochromes, pigments consisting of at least four interconvertible tautomers (A, B, C and D) that have a core phenolic quinone to which various side chains are attached and which play an important role in fungal pathogenesis. The non-reducing polyketide synthase PKS1 was proposed to iteratively catalyze decarboxylation between acetyl-CoA and malonyl-CoA subunits for polyketide chain elongation. The released polyketide undergoes cyclization to form an aromatic ring, and proceeds via serial modification steps to produce the heptaketide back- bone of elsinochrome. As elsinochrome has a symmetrical structure, two identical heptaketides are fused to form a core 1,2-dihydrobenzo-perylene ring structure, which can then be successively modified to produce the various derivatives of elsinochrome. Some of these reactions may be cooperatively carried out, at least in part, by the products of RDT1, OXR1 and PKS1. PRF1, embedded within the elsinochrome cluster possibly functions to stabilize some of the biosynthetic enzymes required for elsinochrome production. As prefoldin is a hexamer containing 2 a and 4 b subunits, additional prefoldin subunits, whose coding genes may not immediately link to the elsinochrome biosynthetic gene cluster, are required to fulfill the chaperone function. In addition, no methyltransferase-coding gene exists within the biosynthetic gene cluster, even though elsinochrome has four methyl groups at positions C3, C7, C8 and C12. Apparently, the identified gene cluster does not contain the entire entourage of genes responsible for elsinochrome biosynthesis. Once elsinochrome is synthesized, it must be exported outside the fungal cells, which is probably accomplished by the ECT1 transporter, to avoid toxicity. The protein is Elsinochromes biosynthesis cluster protein HP2 of Elsinoe fawcettii (Citrus scab fungus).